The primary structure comprises 780 residues: E3 UFM1-protein ligase 1 homolog (780 aa).

Polar residues predominate over residues 403–413 (STSSTNPNHST). 2 disordered regions span residues 403–458 (STSS…RSHI) and 734–760 (SSDK…NIDL). Composition is skewed to basic and acidic residues over residues 443-458 (KDRS…RSHI) and 736-750 (DKQK…KDSD).

Belongs to the UFL1 family.

Its function is as follows. E3 UFM1-protein ligase that mediates ufmylation of target proteins. In Trichoplax adhaerens (Trichoplax reptans), this protein is E3 UFM1-protein ligase 1 homolog.